A 205-amino-acid chain; its full sequence is Holliday junction branch migration complex subunit RuvA (205 aa).

Residues 1-64 are domain I; the sequence is MIGKLKGVID…EDQIKLFGFR (64 aa). The tract at residues 65 to 143 is domain II; the sequence is SDIEREWFRL…AFANVDPAVV (79 aa). Residues 144-154 are flexible linker; it reads HLAGAVDDDRA. The segment at 154–205 is domain III; it reads APRPVKDAISALVNLGYGQPQAAAAIASVARDAGEGAETAQLIRLGLKELAK.

It belongs to the RuvA family. Homotetramer. Forms an RuvA(8)-RuvB(12)-Holliday junction (HJ) complex. HJ DNA is sandwiched between 2 RuvA tetramers; dsDNA enters through RuvA and exits via RuvB. An RuvB hexamer assembles on each DNA strand where it exits the tetramer. Each RuvB hexamer is contacted by two RuvA subunits (via domain III) on 2 adjacent RuvB subunits; this complex drives branch migration. In the full resolvosome a probable DNA-RuvA(4)-RuvB(12)-RuvC(2) complex forms which resolves the HJ.

The protein localises to the cytoplasm. Functionally, the RuvA-RuvB-RuvC complex processes Holliday junction (HJ) DNA during genetic recombination and DNA repair, while the RuvA-RuvB complex plays an important role in the rescue of blocked DNA replication forks via replication fork reversal (RFR). RuvA specifically binds to HJ cruciform DNA, conferring on it an open structure. The RuvB hexamer acts as an ATP-dependent pump, pulling dsDNA into and through the RuvAB complex. HJ branch migration allows RuvC to scan DNA until it finds its consensus sequence, where it cleaves and resolves the cruciform DNA. This chain is Holliday junction branch migration complex subunit RuvA, found in Afipia carboxidovorans (strain ATCC 49405 / DSM 1227 / KCTC 32145 / OM5) (Oligotropha carboxidovorans).